A 381-amino-acid polypeptide reads, in one-letter code: MNGVAQDKVHGLEQTTQWNQQASQKNLTNNPAPKAVTGFKLDKGRAYRKLNEAWPVYEPLDSTKDGKGKDKDGWTTSGASEPKGDAPLVSSTESQMAAVTDSQQSGHNSGLVSLAQRSTTVAVQKSDSSGSQGQGTTDNKFQKYLNTAQALHQMGVIVPSLETWPGKPSTGIATRAGGGVSVQAATRQSSSTNEDLPNVITQLYHTSTSQLAYLNGQIVVMGSNAVPSLWYWVVDERTTSGRATWWAHTELNWGTDKQKQFVENQLGFKDDSNSSLTNFKSQGLTQPAYLIAGLDVVQDHLVFAAFKAGAVGYDMTTDSNASTKDQALAWSTTAGLDSAGGYNKLVENTGGLNGPINELVYPARHLCLCDPGEWDERGESE.

The disordered stretch occupies residues 1-109 (MNGVAQDKVH…TDSQQSGHNS (109 aa)). Polar residues predominate over residues 13-31 (EQTTQWNQQASQKNLTNNP). Composition is skewed to basic and acidic residues over residues 40–51 (KLDKGRAYRKLN) and 61–73 (DSTKDGKGKDKDG). Residues 89 to 109 (VSSTESQMAAVTDSQQSGHNS) are compositionally biased toward polar residues.

It belongs to the MgpC family.

The polypeptide is Putative MgpC-like protein MPN_503 (Mycoplasma pneumoniae (strain ATCC 29342 / M129 / Subtype 1) (Mycoplasmoides pneumoniae)).